We begin with the raw amino-acid sequence, 534 residues long: Protein tweety homolog 2 (534 aa).

Over 1–44 (MAAARVEYIAPWWVYWLHNFPHVDLSLRQKSPDFNPKDPGYQQT) the chain is Extracellular. Residues 45–65 (LLFVALIVALCAAVNLLFVSV) form a helical membrane-spanning segment. Residues 66-87 (YLICLCCCKKEDETETKKTSSC) lie on the Cytoplasmic side of the membrane. A helical transmembrane segment spans residues 88 to 108 (CVTWTAAVSGLLCCAAVGIGF). Residues 109 to 213 (YGNSETNDGV…QTSTIEYYRW (105 aa)) are Extracellular-facing. Residues glutamate 113 and aspartate 116 each coordinate Ca(2+). An N-linked (GlcNAc...) asparagine glycan is attached at asparagine 129. The short motif at 164–166 (RGD) is the RGD element. The N-linked (GlcNAc...) asparagine glycan is linked to asparagine 197. The helical transmembrane segment at 214 to 234 (LSYLLLFISYVVICLVTCVGL) threads the bilayer. The Cytoplasmic segment spans residues 235–240 (AKKSKC). The helical transmembrane segment at 241 to 261 (LLLIMLCFGLIALMLSWTSLA) threads the bilayer. The Extracellular segment spans residues 262 to 388 (LETSSAMGTS…IGICYDGVEG (127 aa)). Disulfide bonds link cysteine 274-cysteine 382 and cysteine 300-cysteine 367. Asparagine 283 and asparagine 352 each carry an N-linked (GlcNAc...) asparagine glycan. A helical transmembrane segment spans residues 389-409 (MLYLGLFSLLAALAFTAMVCA). Residues 410 to 534 (MPQAWKHLEA…SSIYSNVFPA (125 aa)) are Cytoplasmic-facing.

This sequence belongs to the tweety family. In terms of assembly, forms cis-homodimers in the presence of Ca(+2) and forms monomers and trans-dimers in the absence of Ca(2+).

It localises to the cell membrane. It catalyses the reaction chloride(in) = chloride(out). It carries out the reaction L-glutamate(out) = L-glutamate(in). May act as a calcium-independent, swelling-dependent volume-regulated anion channel (VRAC-swell) which plays a pivotal role in the process of regulatory volume decrease (RVD) in the brain through the efflux of anions like chloride and organic osmolytes like glutamate. Probable large-conductance Ca(2+)-activated chloride channel. The polypeptide is Protein tweety homolog 2 (ttyh2) (Xenopus tropicalis (Western clawed frog)).